Here is a 1404-residue protein sequence, read N- to C-terminus: MKTKAGKQKKRSVDSDDDVSRERRPKRATSGTNFKEKSLRFSEKYETVEAKKEQIVGDDEKEEKGVRFQSFGRVENWTISGYEDGSPVIWISTVIADYDCRKPSKKYKKLYDYFFEKACACVEVCKNLSTNPDTSLKELLAAVVRSMNGRKIFSSGGVIQEFVISQGEFIYNQLAGLDETSKNHETKFVDNRVLVSLRDESRKIHKAFSNVALRIDESKVLTSDQLMDGGEDEDLKYAKLLQEEEHMKSMDRSRNKRSSTTSAPNKFYIKINEDEIAHDYPLPSYYKNTKDETDELVLFNAGYAVDARNLPCRTLHNWALYNSDLMLISLEFLPMKPCADIDVTYLGQIKEWKIDFGEDMIFVLLRTDMAWYRLGKPSEQYAPWFEPILKTVRIGTSILALLKNETRMAKLSYTDVIKRLCGLEENDQAYISSTFFDVERYVIVHGQIILQFLTECPDEYIKRCPFVTGLASKMQDRHHTKWIIKKKRKMLQKGENLNLRRGKAPKVSKMKAMQATTTRLINRIWGEFYSIYSPEDPLEEIGAEEEFEEVEDVEEEDENEEEDTIQKAIEVQKADTLKKIRGSCKEMEIRWEGEILGETCAGEPLYGQALVGGRKMDVGGAVILEVDDQGETPLIYFVEYMFESSDNSKKLHGKLLQRGSETVLGTAANERELFLTNECLTVQLKDIKGTVSFEIRSRPWGHQYKKEHMAADKLDRARAEERKAKDLPIEYYCKSLYSPEKGGFFSLPRSDMGLGSGFCSSCKIRENEEERSKTKLNDSKTRFLSNGIKYSVGDFVYQIPNYLSKDRGKRRPVFKYGRNVGLRAFVVCQILDIVDLKEPKKGNTTSFEVKVRRFYRPDDVSAEEAYASDIQEVYYSEDTYILPPEAIKGKCEVMKKTDMPLCREYPILDHVYFCDRFYDSSNGCLKKLPYNMMLKFSTIKDDTLLREKKTETGSAMLLKPDEVPKGKRLATLDIFAGCGGLSYGLEKAGVSDTKWAIEYEEPAAQAFKQNHPKTTVFVDNCNVILRISWLRLLINDRAIMEKCGDVDDCISTTEAAELATKLDENQKSTLPLPGQVDFISGGPPCQGFSRLNRFSDGSWSKNQCQMILAFLSFADYFRPKYFLLENVKTFVSFNEGHTFHLTVASLLEMGYQVRFGLLEAGAYGISQPRKRAFIWAAAPNEVLPEWPEPMHVFNNPGFKIPLSQGLHYAAVQSTKFGAPFRSITVRDAIGDLPPIESGESKINKEEMRGSMTVLTDHICKKMNELNLIRCKKIPKTPGADWRDLPDEHVNLSNGIVKNIVPNLLNKAKDHNGYKGLYGRLDWHGNLPTCITNLQPMGLVGMCFHPDQDRIISVRECARSQGFPDSYKFSGNIKDKHRQVGNAVPPPLAFALGRKLKEALHLRNI.

Positions 1-10 (MKTKAGKQKK) are enriched in basic residues. The interval 1–35 (MKTKAGKQKKRSVDSDDDVSRERRPKRATSGTNFK) is disordered. Positions 11 to 22 (RSVDSDDDVSRE) are enriched in basic and acidic residues. Lys-486 is covalently cross-linked (Glycyl lysine isopeptide (Lys-Gly) (interchain with G-Cter in ubiquitin)). BAH domains are found at residues 614–748 (RKMD…FSLP) and 788–929 (IKYS…KKLP). Residues 969 to 1402 (LATLDIFAGC…RKLKEALHLR (434 aa)) form the SAM-dependent MTase C5-type domain. Cys-1085 is a catalytic residue.

It belongs to the class I-like SAM-binding methyltransferase superfamily. C5-methyltransferase family.

The protein resides in the nucleus. It catalyses the reaction a 2'-deoxycytidine in DNA + S-adenosyl-L-methionine = a 5-methyl-2'-deoxycytidine in DNA + S-adenosyl-L-homocysteine + H(+). Its function is as follows. Maintains chromatin CpG methylation that plays a role in genomic imprinting, regulation of embryogenesis and seed viability. Required for proper patterns of CG DNA methylation in dividing cells. Required during the endosperm development in seeds. The polypeptide is DNA (cytosine-5)-methyltransferase 3 (MET3) (Arabidopsis thaliana (Mouse-ear cress)).